Here is a 312-residue protein sequence, read N- to C-terminus: Ribosomal protein L11 methyltransferase (312 aa).

T162, G183, D205, and N248 together coordinate S-adenosyl-L-methionine.

Belongs to the methyltransferase superfamily. PrmA family.

The protein localises to the cytoplasm. The enzyme catalyses L-lysyl-[protein] + 3 S-adenosyl-L-methionine = N(6),N(6),N(6)-trimethyl-L-lysyl-[protein] + 3 S-adenosyl-L-homocysteine + 3 H(+). Functionally, methylates ribosomal protein L11. The protein is Ribosomal protein L11 methyltransferase of Bacillus cereus (strain B4264).